Reading from the N-terminus, the 125-residue chain is Glycine cleavage system H protein (125 aa).

The Lipoyl-binding domain maps to 22-104; that stretch reads VATVGITIHA…EGEGWLFKLK (83 aa). Lysine 63 is modified (N6-lipoyllysine).

The protein belongs to the GcvH family. The glycine cleavage system is composed of four proteins: P, T, L and H. It depends on (R)-lipoate as a cofactor.

Functionally, the glycine cleavage system catalyzes the degradation of glycine. The H protein shuttles the methylamine group of glycine from the P protein to the T protein. This chain is Glycine cleavage system H protein, found in Brucella abortus (strain 2308).